Consider the following 56-residue polypeptide: Large ribosomal subunit protein bL33 (56 aa).

Residues 1-12 (MASKGGREKIKL) are compositionally biased toward basic and acidic residues. The disordered stretch occupies residues 1–27 (MASKGGREKIKLESTAGTGHFYTTNKN).

This sequence belongs to the bacterial ribosomal protein bL33 family.

The sequence is that of Large ribosomal subunit protein bL33 from Leptothrix cholodnii (strain ATCC 51168 / LMG 8142 / SP-6) (Leptothrix discophora (strain SP-6)).